A 422-amino-acid chain; its full sequence is F-box protein At3g12350 (422 aa).

Residues Ala5–Met52 form the F-box domain. 2 stretches are compositionally biased toward basic and acidic residues: residues Asn197–Gly207 and Lys242–Lys252. 2 disordered regions span residues Asn197 to Ser216 and Leu226 to Lys252.

This Arabidopsis thaliana (Mouse-ear cress) protein is F-box protein At3g12350.